Reading from the N-terminus, the 481-residue chain is Subtilisin-like protease 1 (481 aa).

The signal sequence occupies residues Met1–Ala19. A propeptide spanning residues Ala20–His116 is cleaved from the precursor. In terms of domain architecture, Inhibitor I9 spans Ser34–Val115. The region spanning Ser126 to Lys400 is the Peptidase S8 domain. Residues Asp158 and His190 each act as charge relay system in the active site. A disordered region spans residues Gly175–Met198. The N-linked (GlcNAc...) asparagine glycan is linked to Asn251. The segment at Gly281–Ser312 is disordered. A compositionally biased stretch (polar residues) spans Asn282–Ser294. The active-site Charge relay system is Ser345. The interval Ala379–Asp455 is disordered. Residues Pro424 to Pro450 show a composition bias toward pro residues.

This sequence belongs to the peptidase S8 family.

It is found in the secreted. Secreted subtilisin-like serine protease with keratinolytic activity that contributes to pathogenicity. The sequence is that of Subtilisin-like protease 1 (SUB1) from Arthroderma gypseum (strain ATCC MYA-4604 / CBS 118893) (Microsporum gypseum).